Consider the following 432-residue polypeptide: Putative D-alanyl-D-alanine carboxypeptidase (432 aa).

Residues 7 to 25 (ATVLLTFSLSAFAVEYPVL) traverse the membrane as a helical; Signal-anchor segment.

This sequence belongs to the peptidase S12 family. YfeW subfamily.

It is found in the cell inner membrane. The enzyme catalyses Preferential cleavage: (Ac)2-L-Lys-D-Ala-|-D-Ala. Also transpeptidation of peptidyl-alanyl moieties that are N-acyl substituents of D-alanine.. This is Putative D-alanyl-D-alanine carboxypeptidase from Salmonella enteritidis PT4 (strain P125109).